The chain runs to 242 residues: Ethanolamine ammonia-lyase small subunit (242 aa).

Positions 155 and 176 each coordinate adenosylcob(III)alamin.

This sequence belongs to the EutC family. As to quaternary structure, the basic unit is a heterodimer which dimerizes to form tetramers. The heterotetramers trimerize; 6 large subunits form a core ring with 6 small subunits projecting outwards. It depends on adenosylcob(III)alamin as a cofactor.

The protein localises to the bacterial microcompartment. The catalysed reaction is ethanolamine = acetaldehyde + NH4(+). It functions in the pathway amine and polyamine degradation; ethanolamine degradation. Functionally, catalyzes the deamination of various vicinal amino-alcohols to oxo compounds. Allows this organism to utilize ethanolamine as the sole source of nitrogen and carbon in the presence of external vitamin B12. This Clostridium acetobutylicum (strain ATCC 824 / DSM 792 / JCM 1419 / IAM 19013 / LMG 5710 / NBRC 13948 / NRRL B-527 / VKM B-1787 / 2291 / W) protein is Ethanolamine ammonia-lyase small subunit.